The chain runs to 400 residues: MGGWSSKPRKGMGTNLSVPNPLGFFPDHQLDPAFKANSENPDWDLNPHKDNWPDANKVGVGAFGPGFTPPHGGLLGWSPQAQGLLTTVPAAPPPASTNRQSGRQPTPFSPPLRDTHPQAMQWNSTTFLQTLQDSRVRALYLPAGGSSSGTVSPAQNTVSAISSISSKTGDPVPNMENIASGLLGHLLVLQAGFFSLTKILTIPQSLDSWWTSLNFLGGTPACPGQNSQSQISSHSPTCCPPICPGYRWMCLRRFIIFLCILLLCLIFLLVLLDYQGMLPVCPLTPGSTTTSTGPCKTCTTPAQGTSMFPSCCCTKPTDGNCTCIPIPSSWAFAKYLWGWASVRFSWLSLLVPFVQWFVGLSPTVWLSVIWMMWFWGPSLYNILRPFMPLLPTFFCLWVYI.

M1 bears the N-acetylmethionine mark. Disordered stretches follow at residues 1-24 (MGGWSSKPRKGMGTNLSVPNPLGF) and 86-114 (TTVPAAPPPASTNRQSGRQPTPFSPPLRD). A lipid anchor (N-myristoyl glycine; by host) is attached at G2. A pre-S1 region spans residues 2–119 (GGWSSKPRKG…PPLRDTHPQA (118 aa)). Residues 2-174 (GGWSSKPRKG…SSKTGDPVPN (173 aa)) are pre-S. The Virion surface; in external conformation portion of the chain corresponds to 2-181 (GGWSSKPRKG…VPNMENIASG (180 aa)). Residues 2–253 (GGWSSKPRKG…PGYRWMCLRR (252 aa)) lie on the Intravirion; in internal conformation side of the membrane. Residue W4 is glycosylated (N-linked (GlcNAc...) asparagine). Residues 96–106 (STNRQSGRQPT) show a composition bias toward polar residues. The pre-S2 stretch occupies residues 120 to 174 (MQWNSTTFLQTLQDSRVRALYLPAGGSSSGTVSPAQNTVSAISSISSKTGDPVPN). Residues 182-202 (LLGHLLVLQAGFFSLTKILTI) traverse the membrane as a helical segment. The Intravirion; in external conformation portion of the chain corresponds to 203 to 253 (PQSLDSWWTSLNFLGGTPACPGQNSQSQISSHSPTCCPPICPGYRWMCLRR). Residues 254-274 (FIIFLCILLLCLIFLLVLLDY) form a helical membrane-spanning segment. The Virion surface segment spans residues 275–348 (QGMLPVCPLT…WASVRFSWLS (74 aa)). N-linked (GlcNAc...) asparagine; by host glycosylation occurs at N320. Residues 349-369 (LLVPFVQWFVGLSPTVWLSVI) traverse the membrane as a helical segment. Topologically, residues 370 to 375 (WMMWFW) are intravirion. A helical membrane pass occupies residues 376–398 (GPSLYNILRPFMPLLPTFFCLWV). Residues 399-400 (YI) are Virion surface-facing.

Belongs to the orthohepadnavirus major surface antigen family. In terms of assembly, interacts (via its myristoylated pre-S1 region) with the host SLC10A1/NTCP; this interaction is essential for viral entry. In its internal form (Li-HBsAg), interacts with the capsid protein and with the isoform S. Interacts with host chaperone CANX. As to quaternary structure, associates with host chaperone CANX through its pre-S2 N glycan; this association may be essential for isoform M proper secretion. In terms of assembly, interacts with isoform L. Interacts with the antigens of satellite virus HDV (HDVAgs); this interaction is required for encapsidation of HDV genomic RNA. Isoform M is N-terminally acetylated by host at a ratio of 90%, and N-glycosylated by host at the pre-S2 region. Post-translationally, myristoylated; this modification is essential for its interaction with the host protein SLC10A1/NTCP.

Its subcellular location is the virion membrane. The large envelope protein exists in two topological conformations, one which is termed 'external' or Le-HBsAg and the other 'internal' or Li-HBsAg. In its external conformation the protein attaches the virus to cell receptors and thereby initiating infection. This interaction determines the species specificity and liver tropism. This attachment induces virion internalization predominantly through caveolin-mediated endocytosis. The large envelope protein also assures fusion between virion membrane and endosomal membrane. In its internal conformation the protein plays a role in virion morphogenesis and mediates the contact with the nucleocapsid like a matrix protein. In terms of biological role, the middle envelope protein plays an important role in the budding of the virion. It is involved in the induction of budding in a nucleocapsid independent way. In this process the majority of envelope proteins bud to form subviral lipoprotein particles of 22 nm of diameter that do not contain a nucleocapsid. The polypeptide is Large envelope protein (Hepatitis B virus genotype B2 subtype adw (isolate China/patient4/1996) (HBV-B)).